The sequence spans 140 residues: Large ribosomal subunit protein uL11 (140 aa).

Belongs to the universal ribosomal protein uL11 family. As to quaternary structure, part of the ribosomal stalk of the 50S ribosomal subunit. Interacts with L10 and the large rRNA to form the base of the stalk. L10 forms an elongated spine to which L12 dimers bind in a sequential fashion forming a multimeric L10(L12)X complex. One or more lysine residues are methylated.

Forms part of the ribosomal stalk which helps the ribosome interact with GTP-bound translation factors. The chain is Large ribosomal subunit protein uL11 from Nitratidesulfovibrio vulgaris (strain DSM 19637 / Miyazaki F) (Desulfovibrio vulgaris).